We begin with the raw amino-acid sequence, 286 residues long: Bifunctional protein FolD (286 aa).

NADP(+) contacts are provided by residues 166 to 168 (GRS), S191, and I232.

This sequence belongs to the tetrahydrofolate dehydrogenase/cyclohydrolase family. Homodimer.

The enzyme catalyses (6R)-5,10-methylene-5,6,7,8-tetrahydrofolate + NADP(+) = (6R)-5,10-methenyltetrahydrofolate + NADPH. It catalyses the reaction (6R)-5,10-methenyltetrahydrofolate + H2O = (6R)-10-formyltetrahydrofolate + H(+). Its pathway is one-carbon metabolism; tetrahydrofolate interconversion. In terms of biological role, catalyzes the oxidation of 5,10-methylenetetrahydrofolate to 5,10-methenyltetrahydrofolate and then the hydrolysis of 5,10-methenyltetrahydrofolate to 10-formyltetrahydrofolate. The polypeptide is Bifunctional protein FolD (Herpetosiphon aurantiacus (strain ATCC 23779 / DSM 785 / 114-95)).